Here is a 397-residue protein sequence, read N- to C-terminus: Phosphoglycerate kinase (397 aa).

Substrate contacts are provided by residues 21–23, Arg36, 59–62, Arg118, and Arg151; these read DFN and HCGR. Residues Lys201, Glu323, and 353-356 contribute to the ATP site; that span reads GGDT.

It belongs to the phosphoglycerate kinase family. Monomer.

Its subcellular location is the cytoplasm. It catalyses the reaction (2R)-3-phosphoglycerate + ATP = (2R)-3-phospho-glyceroyl phosphate + ADP. It participates in carbohydrate degradation; glycolysis; pyruvate from D-glyceraldehyde 3-phosphate: step 2/5. The polypeptide is Phosphoglycerate kinase (Bartonella quintana (strain Toulouse) (Rochalimaea quintana)).